A 228-amino-acid chain; its full sequence is Growth arrest-specific protein 1 homolog (228 aa).

An N-terminal signal peptide occupies residues 1-17; sequence MRRVILPLVMTVTLCLA. 2 N-linked (GlcNAc...) asparagine glycosylation sites follow: Asn143 and Asn156. Residue Asp205 is the site of GPI-anchor amidated aspartate attachment. A propeptide spans 206–228 (removed in mature form); sequence SSVGHGFNILSAISVYLLTVLVF.

Pharynx muscle cells from its early formation, in the two-fold embryo, until the adult stage.

It is found in the cell membrane. In terms of biological role, role in pharynx function or development. This is Growth arrest-specific protein 1 homolog (phg-1) from Caenorhabditis elegans.